A 752-amino-acid polypeptide reads, in one-letter code: Pentatricopeptide repeat-containing protein At5g13270, chloroplastic (752 aa).

The transit peptide at 1 to 80 (MTILTVQSSF…LQEMDKAGVS (80 aa)) directs the protein to the chloroplast. 15 PPR repeats span residues 47–81 (QGQV…GVSV), 82–116 (SSYS…IENP), 117–147 (SVLL…MSEL), 148–182 (NAVS…GDKP), 183–217 (PSSM…GLCS), 218–248 (NTSI…MAVK), 249–283 (KPVA…GVEW), 284–318 (DSFV…GLES), 319–349 (EVSV…IREP), 350–384 (NDVS…NASI), 386–420 (NSFT…SLIG), 421–451 (SQYG…MDNP), 452–486 (DIVA…GMKP), 487–522 (NSVT…NVAP), and 523–553 (TIDH…MPFE). The tract at residues 558–633 (SWKCFLSGCW…ELSCSWIQEK (76 aa)) is type E motif. The segment at 634 to 664 (GKIHRFIVGDKHHPQTQEIYEKLKEFDGFME) is type E(+) motif. The interval 665–752 (GDMFQCNMTE…EGKCSCNDYW (88 aa)) is type DYW motif.

Belongs to the PPR family. PCMP-H subfamily.

Its subcellular location is the plastid. The protein localises to the chloroplast. This chain is Pentatricopeptide repeat-containing protein At5g13270, chloroplastic (PCMP-H90), found in Arabidopsis thaliana (Mouse-ear cress).